The following is a 249-amino-acid chain: Triosephosphate isomerase (249 aa).

9–11 contacts substrate; sequence NWK. His94 functions as the Electrophile in the catalytic mechanism. Glu166 (proton acceptor) is an active-site residue. Substrate contacts are provided by residues Gly172, Ser212, and 233–234; that span reads GG.

It belongs to the triosephosphate isomerase family. In terms of assembly, homodimer.

It localises to the cytoplasm. The enzyme catalyses D-glyceraldehyde 3-phosphate = dihydroxyacetone phosphate. Its pathway is carbohydrate biosynthesis; gluconeogenesis. It participates in carbohydrate degradation; glycolysis; D-glyceraldehyde 3-phosphate from glycerone phosphate: step 1/1. Involved in the gluconeogenesis. Catalyzes stereospecifically the conversion of dihydroxyacetone phosphate (DHAP) to D-glyceraldehyde-3-phosphate (G3P). This chain is Triosephosphate isomerase, found in Treponema pallidum (strain Nichols).